The following is a 795-amino-acid chain: Glycerol-3-phosphate acyltransferase 2, mitochondrial (795 aa).

The segment at 1-21 (MATMLEGRCQTQPRSSPSGRE) is disordered. At 1-305 (MATMLEGRCQ…LGPRLSALGQ (305 aa)) the chain is on the cytoplasmic side. Polar residues predominate over residues 9–18 (CQTQPRSSPS). An acyltransferase region spans residues 180-331 (QLHKGQMKMV…DALLVPVAVT (152 aa)). Positions 205–210 (HKTLLD) match the HXXXXD motif motif. A helical transmembrane segment spans residues 306–332 (AWVGFVVQAVQVGIVPDALLVPVAVTY). Over 333–449 (DLVPDAPCDI…QLLVRRLSCH (117 aa)) the chain is Mitochondrial intermembrane. A helical transmembrane segment spans residues 450-472 (VLSASVGSSAVMSTAIMATLLLF). Residues 473–795 (KHQKLLGEFS…EQFIRQFICS (323 aa)) are Cytoplasmic-facing. Serine 656 carries the phosphoserine modification. Threonine 660 carries the phosphothreonine modification. 2 positions are modified to phosphoserine: serine 662 and serine 664.

The protein belongs to the GPAT/DAPAT family. As to quaternary structure, interacts with PIWIL2.

It localises to the mitochondrion outer membrane. It catalyses the reaction sn-glycerol 3-phosphate + an acyl-CoA = a 1-acyl-sn-glycero-3-phosphate + CoA. It carries out the reaction a 1-acyl-sn-glycero-3-phosphate + an acyl-CoA = a 1,2-diacyl-sn-glycero-3-phosphate + CoA. The catalysed reaction is 1-(9Z-octadecenoyl)-sn-glycero-3-phosphate + (9Z)-octadecenoyl-CoA = 1,2-di-(9Z-octadecenoyl)-sn-glycero-3-phosphate + CoA. The enzyme catalyses 1-(9Z-octadecenoyl)-sn-glycero-3-phosphate + (5Z,8Z,11Z,14Z)-eicosatetraenoyl-CoA = 1-(9Z)-octadecenoyl-2-(5Z,8Z,11Z,14Z)-eicosatetraenoyl-sn-glycero-3-phosphate + CoA. It catalyses the reaction (5Z,8Z,11Z,14Z)-eicosatetraenoyl-CoA + sn-glycerol 3-phosphate = 1-(5Z,8Z,11Z,14Z-eicosatetraenoyl)-sn-glycero-3-phosphate + CoA. It participates in phospholipid metabolism; CDP-diacylglycerol biosynthesis; CDP-diacylglycerol from sn-glycerol 3-phosphate: step 1/3. Its activity is regulated as follows. Inhibited by N-ethylmaleimide (NEM). Functionally, transfers an acyl-group from acyl-ACP to the sn-1 position of glycerol-3-phosphate producing a lysophosphatidic acid (LPA), an essential step for the triacylglycerol (TAG) and glycerophospholipids. In vitro also transfers an acyl-group from acyl-ACP to the LPA producing a phosphatidic acid (PA). Prefers arachidonoyl-CoA as the acyl donor. Required for primary processing step during piRNA biosynthesis. Molecular mechanisms by which it promotes piRNA biosynthesis are unclear and do not involve its acyltransferase activity. This is Glycerol-3-phosphate acyltransferase 2, mitochondrial from Homo sapiens (Human).